The following is a 599-amino-acid chain: Elongation factor 4 (599 aa).

Residues 2-184 form the tr-type G domain; it reads KHIRNFSIIA…RLVRDIPAPE (183 aa). Residues 14–19 and 131–134 contribute to the GTP site; these read DHGKST and NKID.

This sequence belongs to the TRAFAC class translation factor GTPase superfamily. Classic translation factor GTPase family. LepA subfamily.

The protein localises to the cell inner membrane. The enzyme catalyses GTP + H2O = GDP + phosphate + H(+). Functionally, required for accurate and efficient protein synthesis under certain stress conditions. May act as a fidelity factor of the translation reaction, by catalyzing a one-codon backward translocation of tRNAs on improperly translocated ribosomes. Back-translocation proceeds from a post-translocation (POST) complex to a pre-translocation (PRE) complex, thus giving elongation factor G a second chance to translocate the tRNAs correctly. Binds to ribosomes in a GTP-dependent manner. The protein is Elongation factor 4 of Yersinia pestis bv. Antiqua (strain Antiqua).